A 705-amino-acid polypeptide reads, in one-letter code: Heat shock 70 kDa protein (705 aa).

Gly residues predominate over residues 624–644 (GGPGGFPGGPGAGHASGGGDD). The tract at residues 624–645 (GGPGGFPGGPGAGHASGGGDDG) is disordered.

This sequence belongs to the heat shock protein 70 family.

The polypeptide is Heat shock 70 kDa protein (HSP70) (Ajellomyces capsulatus (Darling's disease fungus)).